We begin with the raw amino-acid sequence, 310 residues long: Mitochondrial thiamine pyrophosphate carrier 1 (310 aa).

The next 6 membrane-spanning stretches (helical) occupy residues 16-32 (VSPY…GGVA), 88-104 (ILYV…YSAL), 117-141 (IVMP…LTTY), 173-197 (GISG…LMFW), 218-234 (ICGF…TFPL), and 274-291 (GYGV…ISLW). 3 Solcar repeats span residues 16–107 (VSPY…LSKS), 120–205 (PSSV…AREF), and 211–299 (HVPF…VISA).

The protein belongs to the mitochondrial carrier (TC 2.A.29) family.

The protein resides in the mitochondrion inner membrane. Its function is as follows. Mitochondrial transporter that mediates uptake of thiamine pyrophosphate (ThPP) into mitochondria. The polypeptide is Mitochondrial thiamine pyrophosphate carrier 1 (TPC1) (Lodderomyces elongisporus (strain ATCC 11503 / CBS 2605 / JCM 1781 / NBRC 1676 / NRRL YB-4239) (Yeast)).